Reading from the N-terminus, the 240-residue chain is UDP-2,3-diacylglucosamine hydrolase (240 aa).

Residues aspartate 8, histidine 10, aspartate 41, asparagine 79, and histidine 114 each contribute to the Mn(2+) site. Substrate is bound at residue 79-80 (NR). The substrate site is built by aspartate 122, serine 160, asparagine 164, lysine 167, and histidine 195. Residues histidine 195 and histidine 197 each contribute to the Mn(2+) site.

The protein belongs to the LpxH family. It depends on Mn(2+) as a cofactor.

Its subcellular location is the cell inner membrane. The catalysed reaction is UDP-2-N,3-O-bis[(3R)-3-hydroxytetradecanoyl]-alpha-D-glucosamine + H2O = 2-N,3-O-bis[(3R)-3-hydroxytetradecanoyl]-alpha-D-glucosaminyl 1-phosphate + UMP + 2 H(+). The protein operates within glycolipid biosynthesis; lipid IV(A) biosynthesis; lipid IV(A) from (3R)-3-hydroxytetradecanoyl-[acyl-carrier-protein] and UDP-N-acetyl-alpha-D-glucosamine: step 4/6. In terms of biological role, hydrolyzes the pyrophosphate bond of UDP-2,3-diacylglucosamine to yield 2,3-diacylglucosamine 1-phosphate (lipid X) and UMP by catalyzing the attack of water at the alpha-P atom. Involved in the biosynthesis of lipid A, a phosphorylated glycolipid that anchors the lipopolysaccharide to the outer membrane of the cell. The protein is UDP-2,3-diacylglucosamine hydrolase of Cellvibrio japonicus (strain Ueda107) (Pseudomonas fluorescens subsp. cellulosa).